The chain runs to 265 residues: 4-hydroxy-tetrahydrodipicolinate reductase (265 aa).

NAD(+)-binding positions include 7-12 (GASGRM), aspartate 33, 96-98 (GTT), and 120-123 (AANM). Histidine 153 acts as the Proton donor/acceptor in catalysis. Histidine 154 is a binding site for (S)-2,3,4,5-tetrahydrodipicolinate. The active-site Proton donor is lysine 157. 163–164 (GT) provides a ligand contact to (S)-2,3,4,5-tetrahydrodipicolinate.

It belongs to the DapB family.

It is found in the cytoplasm. It catalyses the reaction (S)-2,3,4,5-tetrahydrodipicolinate + NAD(+) + H2O = (2S,4S)-4-hydroxy-2,3,4,5-tetrahydrodipicolinate + NADH + H(+). It carries out the reaction (S)-2,3,4,5-tetrahydrodipicolinate + NADP(+) + H2O = (2S,4S)-4-hydroxy-2,3,4,5-tetrahydrodipicolinate + NADPH + H(+). Its pathway is amino-acid biosynthesis; L-lysine biosynthesis via DAP pathway; (S)-tetrahydrodipicolinate from L-aspartate: step 4/4. Catalyzes the conversion of 4-hydroxy-tetrahydrodipicolinate (HTPA) to tetrahydrodipicolinate. The polypeptide is 4-hydroxy-tetrahydrodipicolinate reductase (Cupriavidus metallidurans (strain ATCC 43123 / DSM 2839 / NBRC 102507 / CH34) (Ralstonia metallidurans)).